A 187-amino-acid polypeptide reads, in one-letter code: Cytokinin riboside 5'-monophosphate phosphoribohydrolase (187 aa).

Substrate contacts are provided by residues Glu80, 98-99, 115-121, and Thr127; these read RK and GVGTLDE.

Belongs to the LOG family.

It carries out the reaction N(6)-(dimethylallyl)adenosine 5'-phosphate + H2O = N(6)-dimethylallyladenine + D-ribose 5-phosphate. The catalysed reaction is 9-ribosyl-trans-zeatin 5'-phosphate + H2O = trans-zeatin + D-ribose 5-phosphate. Functionally, catalyzes the hydrolytic removal of ribose 5'-monophosphate from nitrogen N6-modified adenosines, the final step of bioactive cytokinin synthesis. In Mycobacterium marinum (strain ATCC BAA-535 / M), this protein is Cytokinin riboside 5'-monophosphate phosphoribohydrolase.